A 385-amino-acid polypeptide reads, in one-letter code: Uroporphyrinogen decarboxylase (385 aa).

Residues 53–57 (RQAGR), Asp102, Tyr179, Ser234, and His363 contribute to the substrate site.

The protein belongs to the uroporphyrinogen decarboxylase family. Homodimer.

Its subcellular location is the cytoplasm. It catalyses the reaction uroporphyrinogen III + 4 H(+) = coproporphyrinogen III + 4 CO2. It participates in porphyrin-containing compound metabolism; protoporphyrin-IX biosynthesis; coproporphyrinogen-III from 5-aminolevulinate: step 4/4. In terms of biological role, catalyzes the decarboxylation of four acetate groups of uroporphyrinogen-III to yield coproporphyrinogen-III. This Tropheryma whipplei (strain TW08/27) (Whipple's bacillus) protein is Uroporphyrinogen decarboxylase.